The sequence spans 336 residues: Probable RNA methyltransferase Anae109_4379 (336 aa).

Catalysis depends on Glu-86, which acts as the Proton acceptor. In terms of domain architecture, Radical SAM core spans 93–322 (FDTHHTVCLS…PIVRRYSGGQ (230 aa)). Cys-100 and Cys-328 are disulfide-bonded. [4Fe-4S] cluster is bound by residues Cys-107, Cys-111, and Cys-114. Residues 154–155 (GE), Ser-186, and 209–211 (SLN) contribute to the S-adenosyl-L-methionine site. Cys-328 acts as the S-methylcysteine intermediate in catalysis.

Belongs to the radical SAM superfamily. RlmN family. Requires [4Fe-4S] cluster as cofactor.

The protein localises to the cytoplasm. The sequence is that of Probable RNA methyltransferase Anae109_4379 from Anaeromyxobacter sp. (strain Fw109-5).